The primary structure comprises 341 residues: UDP-3-O-acylglucosamine N-acyltransferase (341 aa).

Residue histidine 240 is the Proton acceptor of the active site.

Belongs to the transferase hexapeptide repeat family. LpxD subfamily. In terms of assembly, homotrimer.

It carries out the reaction a UDP-3-O-[(3R)-3-hydroxyacyl]-alpha-D-glucosamine + a (3R)-hydroxyacyl-[ACP] = a UDP-2-N,3-O-bis[(3R)-3-hydroxyacyl]-alpha-D-glucosamine + holo-[ACP] + H(+). It participates in bacterial outer membrane biogenesis; LPS lipid A biosynthesis. In terms of biological role, catalyzes the N-acylation of UDP-3-O-acylglucosamine using 3-hydroxyacyl-ACP as the acyl donor. Is involved in the biosynthesis of lipid A, a phosphorylated glycolipid that anchors the lipopolysaccharide to the outer membrane of the cell. This Cellvibrio japonicus (strain Ueda107) (Pseudomonas fluorescens subsp. cellulosa) protein is UDP-3-O-acylglucosamine N-acyltransferase.